The following is a 356-amino-acid chain: Mitogen-activated protein kinase PMK1 (356 aa).

The Protein kinase domain occupies 24 to 312 (YDIQDVVGEG…VEEALKHPYL (289 aa)). ATP contacts are provided by residues 30–38 (VGEGAYGVV) and lysine 53.

Belongs to the protein kinase superfamily. CMGC Ser/Thr protein kinase family. MAP kinase subfamily. Mg(2+) serves as cofactor. Post-translationally, phosphorylated by MST7.

The catalysed reaction is L-seryl-[protein] + ATP = O-phospho-L-seryl-[protein] + ADP + H(+). It carries out the reaction L-threonyl-[protein] + ATP = O-phospho-L-threonyl-[protein] + ADP + H(+). Its function is as follows. Mitogen-activated protein kinase; part of the MST11-MST7-PMK1 MAP kinase (MAPK) cascade that is essential for appressorium formation, penetration and invasive growth. Central regulator of appressorium development that acts downstream of the cAMP signal. The MST11-MST7-PMK1 MAP kinase cascade transduces signals from the cell surface sensors MDB2 and SHO1 that recognize various surface signals such as surface hydrophobicity, cutin monomers, and rice leaf waxes. Regulates expression of secreted fungal effector proteins implicated of host immune defenses, preventing reactive oxygen species generation and excessive callose deposition at plasmodesmata. Furthermore, controls the hyphal constriction required for fungal growth from one rice cell to the neighboring cell, enabling host tissue colonization and blast disease. Targets downstream of the PMK1-MAPK pathway include transcription factor MST12 and pathogenicity-related genes GAS1 and GAS2, both of which are expressed during appressorium formation, even if regulation of MST12 is not associated with expression of GAS1 or GAS2. This chain is Mitogen-activated protein kinase PMK1, found in Pyricularia oryzae (Rice blast fungus).